Consider the following 699-residue polypeptide: Epithelial sodium channel subunit alpha (699 aa).

The interval 1–71 (MLDHTRAPEL…EPRQPTEEEE (71 aa)) is disordered. Residues 1-110 (MLDHTRAPEL…CSKHNRMKTA (110 aa)) lie on the Cytoplasmic side of the membrane. Residues 111–131 (FWAVLWLCTFGMMYWQFALLF) traverse the membrane as a helical segment. Topologically, residues 132 to 589 (EEYFSYPVSL…SQWSLWFGSS (458 aa)) are extracellular. 10 cysteine pairs are disulfide-bonded: Cys-158-Cys-332, Cys-256-Cys-263, Cys-309-Cys-316, Cys-421-Cys-506, Cys-443-Cys-483, Cys-443-Cys-502, Cys-447-Cys-498, Cys-456-Cys-483, Cys-456-Cys-506, and Cys-458-Cys-472. The segment at 200–270 (RRRSTRDLRG…SDCFYQTYSS (71 aa)) is gating release of inhibition by proteolysis (GRIP); protease-sensitive region that is responsible for the proteolytic activation of the channel. Positions 211–244 (LPHPLQRLRTPPPPNPARSARSASSSVRDNNPQV) are disordered. Low complexity predominate over residues 227–238 (ARSARSASSSVR). A helical transmembrane segment spans residues 590-610 (VLSVVEMAELIFDLLVITLIM). The Cytoplasmic portion of the chain corresponds to 611 to 699 (LLHRFRSRYW…SSACAPAMAL (89 aa)). A disordered region spans residues 637–699 (ASSFPSRFCP…SSACAPAMAL (63 aa)). Over residues 656 to 667 (PQQGTTPPLALT) the composition is skewed to low complexity. A PY motif; recruits WW domain-containing proteins and is thereby required for ubiquitination and inhibition of the channel by NEDD4 and NEDD4L motif is present at residues 669–673 (PPPAY).

Belongs to the amiloride-sensitive sodium channel (TC 1.A.6) family. SCNN1A subfamily. As to quaternary structure, heterotrimer; containing an alpha/SCNN1A, a beta/SCNN1B and a gamma/SCNN1G subunit. Interacts with WWP1 (via WW domains). Interacts with WWP2 (via WW domains); inhibits the channel. Interacts with BPIFA1; the interaction is indirect via SCNN1B and inhibits the proteolytic processing of SCNN1A and SCNN1G and the activation of ENaC. Interacts with the full-length immature form of PCSK9 (pro-PCSK9). In terms of processing, ubiquitinated. Can be ubiquitinated at multiple sites and undergo monoubiquitination and polyubiquitination. Ubiquitination by NEDD4 or NEDD4L inhibits the ENaC channel through endocytosis, intracellular retention and degradation of its individual subunits. Post-translationally, ENaC is activated through the proteolytic maturation of its subunits. Furin cleaves the SCNN1A subunit, which results in a stepwise increase in the open probability of the channel due to the release of an inhibitory tract. BPIFA1, which is recruited by the SCNN1B subunit, prevents the proteolytic activation of ENaC. N-glycosylated. In terms of tissue distribution, expressed in kidney (at protein level). Expressed in lung (at protein level). Expressed in the epididymis (at protein level). In the caput and corpus regions of the epididymis, expressed uniformly on the luminal and basal surfaces of the ducts and in the sperm in the duct lumen. Also expressed in distal colon and, at low levels, in liver.

The protein resides in the apical cell membrane. The protein localises to the cell projection. It localises to the cilium. It is found in the cytoplasmic granule. Its subcellular location is the cytoplasm. The protein resides in the cytoplasmic vesicle. The protein localises to the secretory vesicle. It localises to the acrosome. It is found in the flagellum. The catalysed reaction is Na(+)(in) = Na(+)(out). With respect to regulation, originally identified and characterized by its inhibition by the diuretic drug amiloride. This is one of the three pore-forming subunits of the heterotrimeric epithelial sodium channel (ENaC), a critical regulator of sodium balance and fluid homeostasis. ENaC operates in epithelial tissues, where it mediates the electrodiffusion of sodium ions from extracellular fluid through the apical membrane of cells, with water following osmotically. It plays a key role in maintaining sodium homeostasis through electrogenic sodium reabsorption in the kidneys. Additionally, ENaC is essential for airway surface liquid homeostasis, which is crucial for proper mucus clearance. In Mus musculus (Mouse), this protein is Epithelial sodium channel subunit alpha.